Here is a 104-residue protein sequence, read N- to C-terminus: Phosphoribosyl-ATP pyrophosphatase (104 aa).

This sequence belongs to the PRA-PH family.

Its subcellular location is the cytoplasm. It catalyses the reaction 1-(5-phospho-beta-D-ribosyl)-ATP + H2O = 1-(5-phospho-beta-D-ribosyl)-5'-AMP + diphosphate + H(+). It participates in amino-acid biosynthesis; L-histidine biosynthesis; L-histidine from 5-phospho-alpha-D-ribose 1-diphosphate: step 2/9. In Methanoregula boonei (strain DSM 21154 / JCM 14090 / 6A8), this protein is Phosphoribosyl-ATP pyrophosphatase.